Consider the following 374-residue polypeptide: Calcium/calmodulin-dependent protein kinase type 1 (374 aa).

One can recognise a Protein kinase domain in the interval 20–276; it reads YDFRDVLGTG…CEQALQHPWI (257 aa). ATP is bound by residues 26-34 and K49; that span reads LGTGAFSEV. K59 is covalently cross-linked (Glycyl lysine isopeptide (Lys-Gly) (interchain with G-Cter in ubiquitin)). D141 (proton acceptor) is an active-site residue. Residue T177 is modified to Phosphothreonine; by CaMKK1 and CaMKK2. An Involved in nuclear import motif is present at residues 263-264; it reads KR. Positions 276-316 are autoinhibitory domain; the sequence is IAGDTALDKNIHQSVSEQIKKNFAKSKWKQAFNATAVVRHM. Positions 296 to 317 are calmodulin-binding; the sequence is KNFAKSKWKQAFNATAVVRHMR. The Nuclear export signal signature appears at 315–321; it reads HMRKLQL.

Belongs to the protein kinase superfamily. CAMK Ser/Thr protein kinase family. CaMK subfamily. As to quaternary structure, monomer. Interacts with XPO1. Post-translationally, phosphorylated by CaMKK1 and CaMKK2 on Thr-177. In terms of processing, polybiquitinated by the E3 ubiquitin-protein ligase complex SCF(FBXL12), leading to proteasomal degradation. Widely expressed.

Its subcellular location is the cytoplasm. It localises to the nucleus. It catalyses the reaction L-seryl-[protein] + ATP = O-phospho-L-seryl-[protein] + ADP + H(+). The catalysed reaction is L-threonyl-[protein] + ATP = O-phospho-L-threonyl-[protein] + ADP + H(+). Its activity is regulated as follows. Activated by Ca(2+)/calmodulin. Binding of calmodulin results in conformational change that relieves intrasteric autoinhibition and allows phosphorylation of Thr-177 within the activation loop by CaMKK1 or CaMKK2. Phosphorylation of Thr-177 results in several fold increase in total activity. Unlike CaMK4, is unable to exhibit autonomous activity after Ca(2+)/calmodulin activation. Its function is as follows. Calcium/calmodulin-dependent protein kinase that operates in the calcium-triggered CaMKK-CaMK1 signaling cascade and, upon calcium influx, regulates transcription activators activity, cell cycle, hormone production, cell differentiation, actin filament organization and neurite outgrowth. Recognizes the substrate consensus sequence [MVLIF]-x-R-x(2)-[ST]-x(3)-[MVLIF]. Regulates axonal extension and growth cone motility in hippocampal and cerebellar nerve cells. Upon NMDA receptor-mediated Ca(2+) elevation, promotes dendritic growth in hippocampal neurons and is essential in synapses for full long-term potentiation (LTP) and ERK2-dependent translational activation. Downstream of NMDA receptors, promotes the formation of spines and synapses in hippocampal neurons by phosphorylating ARHGEF7/BETAPIX on 'Ser-516', which results in the enhancement of ARHGEF7 activity and activation of RAC1. Promotes neuronal differentiation and neurite outgrowth by activation and phosphorylation of MARK2 on 'Ser-91', 'Ser-92', 'Ser-93' and 'Ser-294'. Promotes nuclear export of HDAC5 and binding to 14-3-3 by phosphorylation of 'Ser-259' and 'Ser-498' in the regulation of muscle cell differentiation. Regulates NUMB-mediated endocytosis by phosphorylation of NUMB on 'Ser-275' and 'Ser-294'. Involved in the regulation of basal and estrogen-stimulated migration of medulloblastoma cells through ARHGEF7/BETAPIX phosphorylation. Is required for proper activation of cyclin-D1/CDK4 complex during G1 progression in diploid fibroblasts. Plays a role in K(+) and ANG2-mediated regulation of the aldosterone synthase (CYP11B2) to produce aldosterone in the adrenal cortex. Phosphorylates EIF4G3/eIF4GII. In vitro phosphorylates CREB1, ATF1, CFTR, MYL9 and SYN1/synapsin I. The polypeptide is Calcium/calmodulin-dependent protein kinase type 1 (Camk1) (Rattus norvegicus (Rat)).